Consider the following 397-residue polypeptide: Tryptophan synthase beta chain (397 aa).

K87 is modified (N6-(pyridoxal phosphate)lysine).

It belongs to the TrpB family. In terms of assembly, tetramer of two alpha and two beta chains. It depends on pyridoxal 5'-phosphate as a cofactor.

The enzyme catalyses (1S,2R)-1-C-(indol-3-yl)glycerol 3-phosphate + L-serine = D-glyceraldehyde 3-phosphate + L-tryptophan + H2O. It participates in amino-acid biosynthesis; L-tryptophan biosynthesis; L-tryptophan from chorismate: step 5/5. The beta subunit is responsible for the synthesis of L-tryptophan from indole and L-serine. This Salmonella arizonae (strain ATCC BAA-731 / CDC346-86 / RSK2980) protein is Tryptophan synthase beta chain.